A 255-amino-acid polypeptide reads, in one-letter code: uncharacterized protein (255 aa).

Residues Asn16 and Asn58 are each glycosylated (N-linked (GlcNAc...) asparagine; by host). The next 2 membrane-spanning stretches (helical) occupy residues 72 to 92 and 104 to 124; these read LIYS…TIYY and LWYI…SHIC.

It is found in the membrane. This is an uncharacterized protein from Acanthamoeba polyphaga (Amoeba).